A 671-amino-acid chain; its full sequence is UvrABC system protein C (671 aa).

Positions 16-95 constitute a GIY-YIG domain; it reads TTPGVYRFRD…IKEFKPRFNV (80 aa). Residues 207-242 form the UVR domain; that stretch reads KRFISRLEKDMAAAVAELDYERAAGLRDDIIALRKV.

This sequence belongs to the UvrC family. As to quaternary structure, interacts with UvrB in an incision complex.

Its subcellular location is the cytoplasm. In terms of biological role, the UvrABC repair system catalyzes the recognition and processing of DNA lesions. UvrC both incises the 5' and 3' sides of the lesion. The N-terminal half is responsible for the 3' incision and the C-terminal half is responsible for the 5' incision. The polypeptide is UvrABC system protein C (Paenarthrobacter aurescens (strain TC1)).